Consider the following 258-residue polypeptide: Probable dihydroorotate dehydrogenase B (NAD(+)), electron transfer subunit (258 aa).

The 90-residue stretch at 1 to 90 (MRPISATIKE…RGPYGNGWEI (90 aa)) folds into the FAD-binding FR-type domain. [2Fe-2S] cluster is bound by residues Cys-210, Cys-215, Cys-218, and Cys-228.

It belongs to the PyrK family. Heterotetramer of 2 PyrK and 2 PyrD type B subunits. [2Fe-2S] cluster serves as cofactor. FAD is required as a cofactor.

Its pathway is pyrimidine metabolism; UMP biosynthesis via de novo pathway; orotate from (S)-dihydroorotate (NAD(+) route): step 1/1. Responsible for channeling the electrons from the oxidation of dihydroorotate from the FMN redox center in the PyrD type B subunit to the ultimate electron acceptor NAD(+). The chain is Probable dihydroorotate dehydrogenase B (NAD(+)), electron transfer subunit from Methanocella arvoryzae (strain DSM 22066 / NBRC 105507 / MRE50).